The primary structure comprises 520 residues: Nonsense-mediated mRNA decay factor SMG9 (520 aa).

Positions 1–143 (MSESGHSQPG…KGEKEGQRPT (143 aa)) are disordered. N-acetylserine is present on Ser2. Residues Ser2, Ser4, Ser7, Ser32, and Ser53 each carry the phosphoserine modification. The segment covering 36–53 (GRERDYIAPWERERRDGS) has biased composition (basic and acidic residues). Composition is skewed to pro residues over residues 78 to 94 (QPPP…PAPL) and 122 to 133 (TAPPPPTAPAPP). Ser451 is subject to Phosphoserine.

Belongs to the SMG9 family. As to quaternary structure, self-associates to form homodimers and forms heterodimers with SMG8; these assembly forms may represent SMG1C intermediate forms. Component of the SMG1C complex composed of SMG1, SMG8 and SMG9. Interacts with DHX34; the interaction is RNA-independent. Phosphorylated by SMG1.

Functionally, involved in nonsense-mediated decay (NMD) of mRNAs containing premature stop codons. Is recruited by release factors to stalled ribosomes together with SMG1 and SMG8 (forming the SMG1C protein kinase complex) and, in the SMG1C complex, is required for the efficient association between SMG1 and SMG8. Plays a role in brain, heart, and eye development. The polypeptide is Nonsense-mediated mRNA decay factor SMG9 (Mus musculus (Mouse)).